The sequence spans 328 residues: Tetraacyldisaccharide 4'-kinase (328 aa).

55-62 (TAGGNGKT) contributes to the ATP binding site.

Belongs to the LpxK family.

It carries out the reaction a lipid A disaccharide + ATP = a lipid IVA + ADP + H(+). The protein operates within glycolipid biosynthesis; lipid IV(A) biosynthesis; lipid IV(A) from (3R)-3-hydroxytetradecanoyl-[acyl-carrier-protein] and UDP-N-acetyl-alpha-D-glucosamine: step 6/6. Functionally, transfers the gamma-phosphate of ATP to the 4'-position of a tetraacyldisaccharide 1-phosphate intermediate (termed DS-1-P) to form tetraacyldisaccharide 1,4'-bis-phosphate (lipid IVA). In Yersinia enterocolitica serotype O:8 / biotype 1B (strain NCTC 13174 / 8081), this protein is Tetraacyldisaccharide 4'-kinase.